The primary structure comprises 533 residues: MTPRIESEESAPLVNKNNNNNNDNNNNNNVDEENPLIIESGIPIEDLEQKNKPYLIKVPNIDKPDSKWINFKTLWAFTGPGFLMSIAYLDPGNLESDIQAGAMAGYQLLWVLFWSTVIGFWLQMLASRLGVVTGKHLAEHCREQYPKTPRLLLWLMTELAIIGSDIQEVIGTAIALQILSNGHIPLWAGVLFTAADTFTFLFLEKYGIRKLEAFFCSLIAIMAISFGVEYIISKPDQIEVVKGVFIPLCSQNNISQAVGILGAVVMPHNIYLHSALVQSREIDRKSETQVKIANKYNRLESAFALIISFIINLLLVSVFAKGFYGETTEIGLSSAADFLMDKYGKVAKYIWAIGLFSAGQCSTMTGTYSGQFVMEGFLKLKIAPWKRLLITRCTAIVPAMVVAILSTSHLDSLDQWLNILQSIQLPFAVVPVLLFTSSEKIMGSKFKNHWLNNQFVRFLSLLIIAINIYLIITFSMQISESAWMISIVSISFFFYFIFIVYLSMGQENFNSMTKKIKNLFNNNSNQTYNNINY.

Residues 1 to 33 (MTPRIESEESAPLVNKNNNNNNDNNNNNNVDEE) form a disordered region. Over 1–68 (MTPRIESEES…PNIDKPDSKW (68 aa)) the chain is Cytoplasmic. Residues 14-29 (VNKNNNNNNDNNNNNN) show a composition bias toward low complexity. Residues 69–89 (INFKTLWAFTGPGFLMSIAYL) traverse the membrane as a helical segment. The Extracellular segment spans residues 90–101 (DPGNLESDIQAG). Residues 102-122 (AMAGYQLLWVLFWSTVIGFWL) traverse the membrane as a helical segment. The Cytoplasmic segment spans residues 123-158 (QMLASRLGVVTGKHLAEHCREQYPKTPRLLLWLMTE). Residues 159–179 (LAIIGSDIQEVIGTAIALQIL) traverse the membrane as a helical segment. The Extracellular portion of the chain corresponds to 180 to 182 (SNG). The chain crosses the membrane as a helical span at residues 183 to 203 (HIPLWAGVLFTAADTFTFLFL). Residues 204–212 (EKYGIRKLE) lie on the Cytoplasmic side of the membrane. A helical membrane pass occupies residues 213 to 233 (AFFCSLIAIMAISFGVEYIIS). At 234–256 (KPDQIEVVKGVFIPLCSQNNISQ) the chain is on the extracellular side. Asn253 carries an N-linked (GlcNAc...) asparagine glycan. A helical transmembrane segment spans residues 257–277 (AVGILGAVVMPHNIYLHSALV). Topologically, residues 278 to 302 (QSREIDRKSETQVKIANKYNRLESA) are cytoplasmic. A helical transmembrane segment spans residues 303–323 (FALIISFIINLLLVSVFAKGF). The Extracellular segment spans residues 324 to 348 (YGETTEIGLSSAADFLMDKYGKVAK). Residues 349 to 368 (YIWAIGLFSAGQCSTMTGTY) traverse the membrane as a helical segment. The Cytoplasmic portion of the chain corresponds to 369 to 387 (SGQFVMEGFLKLKIAPWKR). A helical transmembrane segment spans residues 388–408 (LLITRCTAIVPAMVVAILSTS). The Extracellular segment spans residues 409 to 415 (HLDSLDQ). Residues 416-436 (WLNILQSIQLPFAVVPVLLFT) form a helical membrane-spanning segment. The Cytoplasmic portion of the chain corresponds to 437-457 (SSEKIMGSKFKNHWLNNQFVR). A helical transmembrane segment spans residues 458 to 478 (FLSLLIIAINIYLIITFSMQI). At 479–481 (SES) the chain is on the extracellular side. The chain crosses the membrane as a helical span at residues 482-502 (AWMISIVSISFFFYFIFIVYL). At 503-533 (SMGQENFNSMTKKIKNLFNNNSNQTYNNINY) the chain is on the cytoplasmic side.

It belongs to the NRAMP family.

The protein localises to the membrane. Its function is as follows. Depletes iron from the phagolysosome in an ATP-dependent process. May rather act as a symporter of protons and metal cations in an ATP-dependent process. Nramp1 overexpression protected cells from L.pneumophila infection. In Dictyostelium discoideum (Social amoeba), this protein is Metal transporter nramp1 homolog (nramp1).